Consider the following 455-residue polypeptide: Ribosomal protein uS12 methylthiotransferase RimO (455 aa).

Residues 30 to 140 (PTIGMVSLGC…VLDAVHGAVP (111 aa)) enclose the MTTase N-terminal domain. [4Fe-4S] cluster is bound by residues C39, C75, C104, C171, C175, and C178. A Radical SAM core domain is found at 157–386 (LTPRHFSYLK…MEKAQAISEA (230 aa)). Residues 389 to 455 (AAKVGRRIEV…GEYDLWGRPV (67 aa)) enclose the TRAM domain.

It belongs to the methylthiotransferase family. RimO subfamily. The cofactor is [4Fe-4S] cluster.

Its subcellular location is the cytoplasm. It carries out the reaction L-aspartate(89)-[ribosomal protein uS12]-hydrogen + (sulfur carrier)-SH + AH2 + 2 S-adenosyl-L-methionine = 3-methylsulfanyl-L-aspartate(89)-[ribosomal protein uS12]-hydrogen + (sulfur carrier)-H + 5'-deoxyadenosine + L-methionine + A + S-adenosyl-L-homocysteine + 2 H(+). Functionally, catalyzes the methylthiolation of an aspartic acid residue of ribosomal protein uS12. In Cereibacter sphaeroides (strain ATCC 17029 / ATH 2.4.9) (Rhodobacter sphaeroides), this protein is Ribosomal protein uS12 methylthiotransferase RimO.